Here is a 231-residue protein sequence, read N- to C-terminus: Chromosome partition protein MukE (231 aa).

Residues 197 to 231 (RDGEAMPIEGGLSLDDSENDETSDNSAEGTGDEQP) form a disordered region.

Belongs to the MukE family. As to quaternary structure, interacts, and probably forms a ternary complex, with MukF and MukB. The complex formation is stimulated by calcium or magnesium.

The protein localises to the cytoplasm. It is found in the nucleoid. Involved in chromosome condensation, segregation and cell cycle progression. May participate in facilitating chromosome segregation by condensation DNA from both sides of a centrally located replisome during cell division. Probably acts via its interaction with MukB and MukF. The protein is Chromosome partition protein MukE of Photorhabdus laumondii subsp. laumondii (strain DSM 15139 / CIP 105565 / TT01) (Photorhabdus luminescens subsp. laumondii).